A 107-amino-acid chain; its full sequence is Quaternary ammonium compound-resistance protein QacG (107 aa).

4 helical membrane-spanning segments follow: residues 1-21 (MHYL…SFLK), 26-46 (FTKL…FYFL), 57-77 (ITYA…SVIV), and 84-104 (LISI…NVFG).

Belongs to the drug/metabolite transporter (DMT) superfamily. Small multidrug resistance (SMR) (TC 2.A.7.1) family.

Its subcellular location is the cell membrane. Multidrug exporter. Is implicated for the resistance to bacteriocidal quaternary ammonium compounds. The sequence is that of Quaternary ammonium compound-resistance protein QacG (qacG) from Staphylococcus sp. (strain ST94).